A 106-amino-acid chain; its full sequence is Nucleoid-associated protein RPA0616 (106 aa).

It belongs to the YbaB/EbfC family. Homodimer.

Its subcellular location is the cytoplasm. The protein localises to the nucleoid. Functionally, binds to DNA and alters its conformation. May be involved in regulation of gene expression, nucleoid organization and DNA protection. This is Nucleoid-associated protein RPA0616 from Rhodopseudomonas palustris (strain ATCC BAA-98 / CGA009).